Reading from the N-terminus, the 103-residue chain is MSIAVGMIETRGFPAVVEAADSMVKAARVTLVGYEKIGSGRVTVIVRGDVSEVQASVSAGIEAANRVNGGEVLSTHIIARPHENLEYVLPIRYTEEVEQFRTY.

The 87-residue stretch at 4-90 (AVGMIETRGF…PHENLEYVLP (87 aa)) folds into the BMC domain.

It belongs to the bacterial microcompartments protein family. CcmK subfamily. As to quaternary structure, homohexamer, might also make dodecamers. Interacts with full-length CcmM. Forms mixed heterohexamers of all possible stoichiometries with CcmK1, which might form dodecamers. Only very weak interactions with CcmK3 and CcmK4 were seen.

It localises to the carboxysome. In terms of biological role, one of the shell proteins of the carboxysome, a polyhedral inclusion where RuBisCO (ribulose bisphosphate carboxylase, rbcL-rbcS) is sequestered. The central pore probably regulates metabolite flux. Hexamers make sheets that form the facets of the polyhedral carboxysome. In Synechocystis sp. (strain ATCC 27184 / PCC 6803 / Kazusa), this protein is Carboxysome shell protein CcmK2.